Here is a 900-residue protein sequence, read N- to C-terminus: Isoleucine--tRNA ligase (900 aa).

A 'HIGH' region motif is present at residues 58–68; it reads PYANGNIHIGH. Residue E552 coordinates L-isoleucyl-5'-AMP. The 'KMSKS' region motif lies at 593-597; sequence KMSKS. K596 serves as a coordination point for ATP.

Belongs to the class-I aminoacyl-tRNA synthetase family. IleS type 1 subfamily. As to quaternary structure, monomer.

It is found in the cytoplasm. It carries out the reaction tRNA(Ile) + L-isoleucine + ATP = L-isoleucyl-tRNA(Ile) + AMP + diphosphate. In terms of biological role, catalyzes the attachment of isoleucine to tRNA(Ile). As IleRS can inadvertently accommodate and process structurally similar amino acids such as valine, to avoid such errors it has two additional distinct tRNA(Ile)-dependent editing activities. One activity is designated as 'pretransfer' editing and involves the hydrolysis of activated Val-AMP. The other activity is designated 'posttransfer' editing and involves deacylation of mischarged Val-tRNA(Ile). This Ureaplasma parvum serovar 3 (strain ATCC 700970) protein is Isoleucine--tRNA ligase.